We begin with the raw amino-acid sequence, 97 residues long: MDFSQLGGLLDGMKKEFSQLEEKNKDTIHTSKSGGGMVSVSFNGMGELVDLQIDDSLLEDKEAMQIYLMSALNDGYKAVEENRKNLAFNMLGNFAKL.

It belongs to the YbaB/EbfC family. In terms of assembly, homodimer.

Its subcellular location is the cytoplasm. The protein resides in the nucleoid. In terms of biological role, binds to DNA and alters its conformation. May be involved in regulation of gene expression, nucleoid organization and DNA protection. The chain is Nucleoid-associated protein HPP12_0031 from Helicobacter pylori (strain P12).